A 492-amino-acid polypeptide reads, in one-letter code: ATP synthase subunit beta, chloroplastic (492 aa).

170–177 (GGAGVGKT) lines the ATP pocket.

The protein belongs to the ATPase alpha/beta chains family. In terms of assembly, F-type ATPases have 2 components, CF(1) - the catalytic core - and CF(0) - the membrane proton channel. CF(1) has five subunits: alpha(3), beta(3), gamma(1), delta(1), epsilon(1). CF(0) has four main subunits: a(1), b(1), b'(1) and c(9-12).

The protein localises to the plastid. It is found in the chloroplast thylakoid membrane. The enzyme catalyses ATP + H2O + 4 H(+)(in) = ADP + phosphate + 5 H(+)(out). Functionally, produces ATP from ADP in the presence of a proton gradient across the membrane. The catalytic sites are hosted primarily by the beta subunits. This chain is ATP synthase subunit beta, chloroplastic, found in Huperzia lucidula (Shining clubmoss).